We begin with the raw amino-acid sequence, 662 residues long: Hypoxia-inducible factor 3-alpha (662 aa).

Positions 1–25 are disordered; sequence MDWDQDRSNTELRKEKSRDAARSRR. Positions 12-65 constitute a bHLH domain; it reads LRKEKSRDAARSRRSQETEVLYQLAHTLPFARGVSAHLDKASIMRLTISYLRMH. Residues 75-98 form a nuclear localization signal (isoform 2) region; sequence QVEKGGEPLDACYLKALEGFVMVL. PAS domains follow at residues 80–150 and 225–295; these read GEPL…PNLS and PHPA…LSKG. The interval 228–272 is nuclear export signal (isoform 2); the sequence is ASLEPPLGRGAFLSRHSLDMKFTYCDERIAEVAGYSPDDLIGCSA. Disordered regions lie at residues 352–377 and 416–446; these read EQTE…GNSV and PILD…DLPD. Positions 414–418 match the LRRLL motif; that stretch reads MAPIL. Positions 426-437 are enriched in low complexity; it reads TPSTPQATRRPQ. Residues 448–581 are ODD; it reads LTVGLENAHR…SEDKGLELLE (134 aa). Residues 450–501 are NTAD; that stretch reads VGLENAHRLSTAQKNKTVETDLDIAQDPDTLDLEMLAPYISMDDDFQLNSSE. Lysine 463 is covalently cross-linked (Glycyl lysine isopeptide (Lys-Gly) (interchain with G-Cter in ubiquitin)). The LAPYISMD signature appears at 485–492; sequence LAPYISMD. 4-hydroxyproline is present on proline 487. A disordered region spans residues 500-595; it reads SEQLPKVHRR…KRSPRLEPGS (96 aa). Residues 505-521 are compositionally biased toward basic residues; it reads KVHRRPPRVARRPRARS. Lysine 565 participates in a covalent cross-link: Glycyl lysine isopeptide (Lys-Gly) (interchain with G-Cter in ubiquitin). The span at 572 to 584 shows a compositional bias: basic and acidic residues; it reads SEDKGLELLETKP.

As to quaternary structure, isoform 1 interacts with ARNT. Isoform 2 interacts with HIF1A. Isoform 2 interacts EPAS1. Isoform 2 interacts (via C-terminus domain) with BAD; the interaction reduces the binding between BAD and BAX. Isoform 2 (via C-terminus domain) interacts with BCL2L2 and MCL1. Interacts with VHL. In normoxia, hydroxylated on Pro-487 in the oxygen-dependent degradation domain (ODD) by PHD. The hydroxylated proline promotes interaction with VHL, initiating rapid ubiquitination and subsequent proteasomal degradation. In terms of processing, ubiquitinated; ubiquitination occurs in a VHL- and oxygen-dependent pathway and subsequently targeted for proteasomal degradation. As to expression, isoform 3 is expressed in endothelial cells of vessels and capillaries in alveoli of the neonatal lung (at protein level). Expressed in lung, brain, heart and kidney. Isoform 2 is expressed in heart and lung. Isoform 2 is highly expressed in the epithelial cell layer of the cornea with lower expression in the layers of ganglion cells, inner nuclear cells, and rods and cones of the retina. Isoform 2 is expressed in the cerebellum only in the Purkinje cell layer.

It is found in the nucleus. The protein resides in the cytoplasm. The protein localises to the nucleus speckle. Its subcellular location is the mitochondrion. Functionally, acts as a transcriptional regulator in adaptive response to low oxygen tension. Acts as a regulator of hypoxia-inducible gene expression. Plays a role in the development of the cardiorespiratory system. Acts as a positive regulator of hypoxia-inducible gene expression. Associates to core DNA sequence 5'-TACGTG-3' within the hypoxia response element (HRE) of target gene promoters in a ARNT-dependent manner, and hence also participates in the transcriptional activation of reporter genes driven by HRE. In terms of biological role, attenuates the ability of transcription factor HIF1A, EPAS1 and the HIF1A-ARNT complex to bind to hypoxia-responsive elements (HRE) located within the enhancer/promoter of hypoxia-inducible target genes and hence inhibits HRE-driven transcriptional activation. Functions as an inhibitor of angiogenesis in hypoxic cells of the cornea. May act as a tumor suppressor. May also be involved in apoptosis. Its function is as follows. Attenuates the ability of transcription factor HIF1A, EPAS1 and the HIF1A-ARNT complex to bind to hypoxia-responsive elements (HRE) located within the enhancer/promoter of hypoxia-inducible target genes and hence inhibits HRE-driven transcriptional activation. Also plays a role in the development of the lung and heart during embryonic and neonatal stages. The polypeptide is Hypoxia-inducible factor 3-alpha (Mus musculus (Mouse)).